The sequence spans 424 residues: O-methyltransferase bfoD (424 aa).

Asp275 serves as a coordination point for S-adenosyl-L-methionine. His326 functions as the Proton acceptor in the catalytic mechanism.

This sequence belongs to the class I-like SAM-binding methyltransferase superfamily. Cation-independent O-methyltransferase family.

It participates in secondary metabolite biosynthesis. Its function is as follows. Cytochrome P450 monooxygenase; part of the gene cluster that mediates the biosynthesis of bifonsecin B, a dimeric gamma-naphthopyrone. The first step in the biosynthesis of bifonsecin B is the production of gamma-naphthopyrone precursor YWA1 by the non-reducing polyketide synthase albA, via condensation of one acetyl-CoA starter unit with 6 malonyl-CoA units. YWA1 is then methylated by bfoE at position C-6 to yield foncesin which is further methylated at position C-8 by bfoD to produce fonsecin B. A key enzyme in the biosynthetic pathway is the cytochrome P450 monooxygenase bfoB which catalyzes the oxidative dimerization of fonsecin B to bifonsecin B. Bfob also catalyzes the oxidative dimerization of rubrofusarin B into nigerone. The stereoselectivity of bfoB is influenced by the two natural monomeric substrates; homodimerization of fonsecin B yields a stereochemically pure biaryl, M-foncerine B, while rubrofusarin B yields a mixture of enantiomers M- and P-nigerone. The polypeptide is O-methyltransferase bfoD (Aspergillus brasiliensis (strain CBS 101740 / IMI 381727 / IBT 21946)).